Consider the following 284-residue polypeptide: Bifunctional protein FolD (284 aa).

Residues 165-167, S190, and V231 each bind NADP(+); that span reads GRS.

Belongs to the tetrahydrofolate dehydrogenase/cyclohydrolase family. In terms of assembly, homodimer.

It carries out the reaction (6R)-5,10-methylene-5,6,7,8-tetrahydrofolate + NADP(+) = (6R)-5,10-methenyltetrahydrofolate + NADPH. The catalysed reaction is (6R)-5,10-methenyltetrahydrofolate + H2O = (6R)-10-formyltetrahydrofolate + H(+). It participates in one-carbon metabolism; tetrahydrofolate interconversion. Its function is as follows. Catalyzes the oxidation of 5,10-methylenetetrahydrofolate to 5,10-methenyltetrahydrofolate and then the hydrolysis of 5,10-methenyltetrahydrofolate to 10-formyltetrahydrofolate. The chain is Bifunctional protein FolD from Brevibacillus brevis (strain 47 / JCM 6285 / NBRC 100599).